Here is a 31-residue protein sequence, read N- to C-terminus: Cytochrome b6-f complex subunit 6 (31 aa).

A helical membrane pass occupies residues I4 to S26.

Belongs to the PetL family. As to quaternary structure, the 4 large subunits of the cytochrome b6-f complex are cytochrome b6, subunit IV (17 kDa polypeptide, PetD), cytochrome f and the Rieske protein, while the 4 small subunits are PetG, PetL, PetM and PetN. The complex functions as a dimer.

The protein resides in the plastid. The protein localises to the chloroplast thylakoid membrane. Functionally, component of the cytochrome b6-f complex, which mediates electron transfer between photosystem II (PSII) and photosystem I (PSI), cyclic electron flow around PSI, and state transitions. PetL is important for photoautotrophic growth as well as for electron transfer efficiency and stability of the cytochrome b6-f complex. This Nymphaea alba (White water-lily) protein is Cytochrome b6-f complex subunit 6.